A 194-amino-acid polypeptide reads, in one-letter code: dCTP deaminase (194 aa).

DCTP contacts are provided by residues 110 to 115 (RSSLAR), Asp-128, 136 to 138 (VLE), Tyr-171, Lys-178, and Gln-182. Glu-138 serves as the catalytic Proton donor/acceptor.

This sequence belongs to the dCTP deaminase family. In terms of assembly, homotrimer.

The catalysed reaction is dCTP + H2O + H(+) = dUTP + NH4(+). It participates in pyrimidine metabolism; dUMP biosynthesis; dUMP from dCTP (dUTP route): step 1/2. In terms of biological role, catalyzes the deamination of dCTP to dUTP. This chain is dCTP deaminase, found in Mannheimia succiniciproducens (strain KCTC 0769BP / MBEL55E).